We begin with the raw amino-acid sequence, 459 residues long: Protein maelstrom (459 aa).

Residues 2–69 (APKKHSGFMM…AQRAKRESSN (68 aa)) constitute a DNA-binding region (HMG box). A disordered region spans residues 43–78 (NTQQRGPYNSGGKDANVAQRAKRESSNGHGQVDKAQ). The span at 63 to 78 (AKRESSNGHGQVDKAQ) shows a compositional bias: basic and acidic residues.

This sequence belongs to the maelstrom family. In germaria and egg chambers, it is detected in the germline. In the germarium, it is in all regions, including region I where the germ cells are dividing. In early egg chambers, it is uniformly distributed throughout the nurse cells and oocyte but, by stage 5, it is most concentrated around the outer margins of the cells, closest to the periphery of the egg chamber. Level decreases in stages 5 and 6, but most noticeably in the oocyte, where protein level remains. No detectable protein from stage 8 onward (at protein level).

Its subcellular location is the cytoplasm. It localises to the nucleus. It is found in the perinuclear region. The protein localises to the cytoplasmic ribonucleoprotein granule. Its function is as follows. Involved both in the piRNA and miRNA metabolic processes. As a component of the meiotic nuage, plays a central role during oogenesis by repressing transposable elements and preventing their mobilization, which is essential for the germline integrity. Repression of transposable elements is mediated via the piRNA metabolic process, which mediates the repression of transposable elements during meiosis by forming complexes composed of piRNAs and Piwi proteins and governs the repression of transposons. As a nuclear component, it is required for proper differentiation in the germline stem cell (GSC) lineage by repressing microRNA-7 (miR-7), thereby acting as an indirect regulator of bag-of-marbles (Bam). Acts by binding to the promoter of miR-7 gene and repressing its expression; miR-7 repression alleviates the Bam repression by miR-7, thereby allowing differentiation in the germline stem cell (GSC) lineage. Indirectly required to position the microtubule organizing center in stage 2-6 oocytes. Involved in repression of long interspersed nuclear elements (LINEs) including HeT-A, I-element, TART and possibly mst40 LINEs; may have a role in production of piwi-interacting RNA (piRNA). The protein is Protein maelstrom of Drosophila melanogaster (Fruit fly).